The sequence spans 81 residues: Large ribosomal subunit protein bL27 (81 aa).

Residues 1 to 11 show a composition bias toward polar residues; it reads MATSKSGGSSK. The disordered stretch occupies residues 1–24; the sequence is MATSKSGGSSKNGRDSISKRLGVK.

It belongs to the bacterial ribosomal protein bL27 family.

This is Large ribosomal subunit protein bL27 from Borrelia duttonii (strain Ly).